We begin with the raw amino-acid sequence, 114 residues long: uncharacterized protein (114 aa).

The helical transmembrane segment at Y7–L27 threads the bilayer. The interval K90–R114 is disordered.

It localises to the membrane. This is an uncharacterized protein from Saccharomyces cerevisiae (strain ATCC 204508 / S288c) (Baker's yeast).